Consider the following 80-residue polypeptide: RNA-binding protein KhpA (80 aa).

Residues 33 to 80 (LEILQLRVASEDVGKVIGKHGRIARALRTLLSASAHASQTRYALEIID) form the KH domain.

Belongs to the KhpA RNA-binding protein family. Forms a complex with KhpB.

Its subcellular location is the cytoplasm. A probable RNA chaperone. Forms a complex with KhpB which binds to cellular RNA and controls its expression. Plays a role in peptidoglycan (PG) homeostasis and cell length regulation. In Treponema pallidum (strain Nichols), this protein is RNA-binding protein KhpA.